We begin with the raw amino-acid sequence, 465 residues long: Hydroxyacid-oxoacid transhydrogenase, mitochondrial (465 aa).

The protein belongs to the iron-containing alcohol dehydrogenase family. Hydroxyacid-oxoacid transhydrogenase subfamily.

Its subcellular location is the mitochondrion. It carries out the reaction (S)-3-hydroxybutanoate + 2-oxoglutarate = (R)-2-hydroxyglutarate + acetoacetate. The catalysed reaction is 4-hydroxybutanoate + 2-oxoglutarate = (R)-2-hydroxyglutarate + succinate semialdehyde. Functionally, catalyzes the cofactor-independent reversible oxidation of gamma-hydroxybutyrate (GHB) to succinic semialdehyde (SSA) coupled to reduction of 2-ketoglutarate (2-KG) to D-2-hydroxyglutarate (D-2-HG). L-3-hydroxybutyrate (L-3-OHB) is also a substrate for HOT when using 2-KG as hydrogen acceptor, resulting in the formation of D-2-HG. The chain is Hydroxyacid-oxoacid transhydrogenase, mitochondrial from Caenorhabditis elegans.